The chain runs to 239 residues: Pyridoxine 5'-phosphate synthase (239 aa).

N7 contacts 3-amino-2-oxopropyl phosphate. Residue 9 to 10 (DH) coordinates 1-deoxy-D-xylulose 5-phosphate. R18 provides a ligand contact to 3-amino-2-oxopropyl phosphate. The active-site Proton acceptor is the H43. 1-deoxy-D-xylulose 5-phosphate-binding residues include R45 and H50. Catalysis depends on E70, which acts as the Proton acceptor. A 1-deoxy-D-xylulose 5-phosphate-binding site is contributed by T100. The active-site Proton donor is the H191. 3-amino-2-oxopropyl phosphate-binding positions include G192 and 213–214 (GH).

The protein belongs to the PNP synthase family. In terms of assembly, homooctamer; tetramer of dimers.

Its subcellular location is the cytoplasm. The enzyme catalyses 3-amino-2-oxopropyl phosphate + 1-deoxy-D-xylulose 5-phosphate = pyridoxine 5'-phosphate + phosphate + 2 H2O + H(+). Its pathway is cofactor biosynthesis; pyridoxine 5'-phosphate biosynthesis; pyridoxine 5'-phosphate from D-erythrose 4-phosphate: step 5/5. Functionally, catalyzes the complicated ring closure reaction between the two acyclic compounds 1-deoxy-D-xylulose-5-phosphate (DXP) and 3-amino-2-oxopropyl phosphate (1-amino-acetone-3-phosphate or AAP) to form pyridoxine 5'-phosphate (PNP) and inorganic phosphate. The protein is Pyridoxine 5'-phosphate synthase of Nostoc sp. (strain PCC 7120 / SAG 25.82 / UTEX 2576).